Here is a 452-residue protein sequence, read N- to C-terminus: UDP-N-acetylmuramoylalanine--D-glutamate ligase (452 aa).

Gly-115–Thr-121 serves as a coordination point for ATP.

The protein belongs to the MurCDEF family.

It localises to the cytoplasm. It catalyses the reaction UDP-N-acetyl-alpha-D-muramoyl-L-alanine + D-glutamate + ATP = UDP-N-acetyl-alpha-D-muramoyl-L-alanyl-D-glutamate + ADP + phosphate + H(+). It functions in the pathway cell wall biogenesis; peptidoglycan biosynthesis. In terms of biological role, cell wall formation. Catalyzes the addition of glutamate to the nucleotide precursor UDP-N-acetylmuramoyl-L-alanine (UMA). This Geobacter sp. (strain M21) protein is UDP-N-acetylmuramoylalanine--D-glutamate ligase.